Consider the following 186-residue polypeptide: ATP synthase subunit delta (186 aa).

This sequence belongs to the ATPase delta chain family. F-type ATPases have 2 components, F(1) - the catalytic core - and F(0) - the membrane proton channel. F(1) has five subunits: alpha(3), beta(3), gamma(1), delta(1), epsilon(1). F(0) has three main subunits: a(1), b(2) and c(10-14). The alpha and beta chains form an alternating ring which encloses part of the gamma chain. F(1) is attached to F(0) by a central stalk formed by the gamma and epsilon chains, while a peripheral stalk is formed by the delta and b chains.

The protein resides in the cell inner membrane. In terms of biological role, f(1)F(0) ATP synthase produces ATP from ADP in the presence of a proton or sodium gradient. F-type ATPases consist of two structural domains, F(1) containing the extramembraneous catalytic core and F(0) containing the membrane proton channel, linked together by a central stalk and a peripheral stalk. During catalysis, ATP synthesis in the catalytic domain of F(1) is coupled via a rotary mechanism of the central stalk subunits to proton translocation. Its function is as follows. This protein is part of the stalk that links CF(0) to CF(1). It either transmits conformational changes from CF(0) to CF(1) or is implicated in proton conduction. This Nitrobacter hamburgensis (strain DSM 10229 / NCIMB 13809 / X14) protein is ATP synthase subunit delta.